A 443-amino-acid polypeptide reads, in one-letter code: Nitrate/nitrite binding protein NrtA (443 aa).

Residues methionine 1–alanine 25 form the signal peptide. Residue cysteine 26 is the site of N-palmitoyl cysteine attachment. The S-diacylglycerol cysteine moiety is linked to residue cysteine 26. The segment covering serine 31 to glycine 46 has biased composition (low complexity). The interval serine 31–alanine 52 is disordered. Residues tryptophan 96, glutamine 150, histidine 195, glycine 239, and lysine 268 each coordinate nitrate.

This sequence belongs to the CmpA/NrtA family. In terms of assembly, the complex is composed of two ATP-binding proteins (NrtC and NrtD), two transmembrane proteins (NrtB) and a solute-binding protein (NrtA). NrtA can form homotrimers. The N-terminus is blocked.

It is found in the cell inner membrane. Functionally, part of the ABC transporter complex NrtABCD involved in nitrate uptake. The complex is probably also involved in nitrite transport. NrtA is the substrate-binding protein. Binds both nitrate and nitrite with high affinity. The chain is Nitrate/nitrite binding protein NrtA from Synechococcus elongatus (strain ATCC 33912 / PCC 7942 / FACHB-805) (Anacystis nidulans R2).